The following is a 583-amino-acid chain: MSDEEDYAEYMMSEEDMSSFEMDVDSDVEPDDAGLEQDQQVTGDDYDGSAGNSGDSMAAVEKQCESWYDTGKAFKNDDQFEEARKWFMKCHASPIWWFKSLKQIIKSDLSQGLRVNERLREMFELVSTKKEMIGEESYIYGSVKRLINRIVPDLNSHLLFTERLRQSSIDVSTLMERQRYLDILEKSVADMDQELRDLVTIRKIVYCVWIHVLRWEQIPKETLEDLHENVNLETYFILLQLHVRTFVDEDIVHLIELVKVVDEMGRFMTNSLSVSQIPTVTSVYHFARFLTLWKSTDHYNQSQMLSKCEGELTSCFQDLEAIGGTERDGLMLTRFSLMGIVFCHLLLNDKTKLVPFELEQIKVLEADELVVLLQELYQCWLDMDIYALEQCLLQLEDFYSPWYNVMIEKIIALCQSNKLWKRIAPTYSCIALQDLMAKLETGNTITMNRDQLLTLLMKSIAKDTADVYYKLDLVEDYVYFGEEYFVPLRSEELNIVNPLSQQMGSEIIGKDEWLCNVSNWHKPKVPKKLSAIEFMDYMKAARVTISQTNLAHHEPTVTSFLLKLSTITHAQLTQNSSSLASTN.

The segment covering 1 to 35 (MSDEEDYAEYMMSEEDMSSFEMDVDSDVEPDDAGL) has biased composition (acidic residues). The disordered stretch occupies residues 1–55 (MSDEEDYAEYMMSEEDMSSFEMDVDSDVEPDDAGLEQDQQVTGDDYDGSAGNSGD). Residues 297-485 (DHYNQSQMLS…DYVYFGEEYF (189 aa)) enclose the PCI domain.

Component of a COP9 signalosome-like (CSN) complex.

Its subcellular location is the cytoplasm. It localises to the nucleus. Component of the COP9 signalosome (CSN) complex that acts as an regulator of the ubiquitin (Ubl) conjugation pathway by mediating the deneddylation of the cullin subunit of SCF-type E3 ubiquitin-protein ligase complexes. The CSN complex is involved in the regulation of the mating pheromone response. The protein is COP9 signalosome complex subunit 10 (RRI2) of Kluyveromyces lactis (strain ATCC 8585 / CBS 2359 / DSM 70799 / NBRC 1267 / NRRL Y-1140 / WM37) (Yeast).